The following is a 203-amino-acid chain: Endo-type membrane-bound lytic murein transglycosylase A (203 aa).

An N-terminal signal peptide occupies residues 1–15 (MKLRWFAFLVVLLAG). Residue Cys16 is the site of N-palmitoyl cysteine attachment. Cys16 is lipidated: S-diacylglycerol cysteine.

It belongs to the transglycosylase Slt family.

The protein localises to the cell outer membrane. The enzyme catalyses Endolytic cleavage of the (1-&gt;4)-beta-glycosidic linkage between N-acetylmuramic acid (MurNAc) and N-acetylglucosamine (GlcNAc) residues in peptidoglycan with concomitant formation of a 1,6-anhydrobond in the MurNAc residue.. Functionally, murein-degrading enzyme. May play a role in recycling of muropeptides during cell elongation and/or cell division. Preferentially cleaves at a distance of more than two disaccharide units from the ends of the glycan chain. This chain is Endo-type membrane-bound lytic murein transglycosylase A, found in Citrobacter koseri (strain ATCC BAA-895 / CDC 4225-83 / SGSC4696).